Consider the following 244-residue polypeptide: tRNA pseudouridine synthase A (244 aa).

The active-site Nucleophile is the Asp-52. Tyr-110 is a substrate binding site.

The protein belongs to the tRNA pseudouridine synthase TruA family. In terms of assembly, homodimer.

The catalysed reaction is uridine(38/39/40) in tRNA = pseudouridine(38/39/40) in tRNA. In terms of biological role, formation of pseudouridine at positions 38, 39 and 40 in the anticodon stem and loop of transfer RNAs. The polypeptide is tRNA pseudouridine synthase A (Acetivibrio thermocellus (strain ATCC 27405 / DSM 1237 / JCM 9322 / NBRC 103400 / NCIMB 10682 / NRRL B-4536 / VPI 7372) (Clostridium thermocellum)).